The following is a 373-amino-acid chain: 3 beta-hydroxysteroid dehydrogenase/Delta 5--&gt;4-isomerase type 2 (373 aa).

Tyr-155 serves as the catalytic Proton acceptor. Lys-159 is a binding site for NAD(+). The chain crosses the membrane as a helical span at residues 288 to 308; it reads VALLYWLGFLLELVNFLLRPV.

This sequence belongs to the 3-beta-HSD family. High levels in adrenal gland, kidney and male liver. Low levels in female liver.

The protein localises to the endoplasmic reticulum membrane. Its subcellular location is the mitochondrion membrane. It carries out the reaction a 3beta-hydroxy-Delta(5)-steroid + NAD(+) = a 3-oxo-Delta(5)-steroid + NADH + H(+). The enzyme catalyses a 3-oxo-Delta(5)-steroid = a 3-oxo-Delta(4)-steroid. It catalyses the reaction pregnenolone + NAD(+) = pregn-5-ene-3,20-dione + NADH + H(+). The catalysed reaction is pregn-5-ene-3,20-dione = progesterone. It carries out the reaction 3beta-hydroxyandrost-5-en-17-one + NAD(+) = androst-5-ene-3,17-dione + NADH + H(+). The enzyme catalyses androst-5-ene-3,17-dione = androst-4-ene-3,17-dione. The protein operates within lipid metabolism; steroid biosynthesis. In terms of biological role, 3-beta-HSD is a bifunctional enzyme, that catalyzes the oxidative conversion of Delta(5)-ene-3-beta-hydroxy steroid, and the oxidative conversion of ketosteroids. The 3-beta-HSD enzymatic system plays a crucial role in the biosynthesis of all classes of hormonal steroids. In Mesocricetus auratus (Golden hamster), this protein is 3 beta-hydroxysteroid dehydrogenase/Delta 5--&gt;4-isomerase type 2 (HSD3B2).